Reading from the N-terminus, the 171-residue chain is Probable chorismate pyruvate-lyase (171 aa).

4 residues coordinate substrate: methionine 36, arginine 78, leucine 116, and glutamate 157.

It belongs to the UbiC family.

The protein localises to the cytoplasm. The enzyme catalyses chorismate = 4-hydroxybenzoate + pyruvate. Its pathway is cofactor biosynthesis; ubiquinone biosynthesis. Functionally, removes the pyruvyl group from chorismate, with concomitant aromatization of the ring, to provide 4-hydroxybenzoate (4HB) for the ubiquinone pathway. The chain is Probable chorismate pyruvate-lyase from Bartonella bacilliformis (strain ATCC 35685 / KC583 / Herrer 020/F12,63).